The primary structure comprises 329 residues: 31 kDa immunogenic protein (329 aa).

The N-terminal stretch at 1–28 (MKFGSKIRRLAVAAVAGAIALGASFAVA) is a signal peptide.

This chain is 31 kDa immunogenic protein (bcsP31), found in Brucella abortus biovar 1 (strain 9-941).